The following is a 238-amino-acid chain: ATP synthase subunit a (238 aa).

5 helical membrane-spanning segments follow: residues 18 to 38 (GTTM…TVIG), 76 to 96 (FIVL…MGIP), 117 to 137 (VLTL…GIMV), 173 to 193 (LFGN…LGTT), and 208 to 230 (WQAF…AMVY).

Belongs to the ATPase A chain family. As to quaternary structure, F-type ATPases have 2 components, CF(1) - the catalytic core - and CF(0) - the membrane proton channel. CF(1) has five subunits: alpha(3), beta(3), gamma(1), delta(1), epsilon(1). CF(0) has three main subunits: a(1), b(2) and c(9-12). The alpha and beta chains form an alternating ring which encloses part of the gamma chain. CF(1) is attached to CF(0) by a central stalk formed by the gamma and epsilon chains, while a peripheral stalk is formed by the delta and b chains.

The protein localises to the cell membrane. In terms of biological role, key component of the proton channel; it plays a direct role in the translocation of protons across the membrane. This chain is ATP synthase subunit a, found in Shouchella clausii (strain KSM-K16) (Alkalihalobacillus clausii).